Reading from the N-terminus, the 323-residue chain is Probable pectate lyase A (323 aa).

An N-terminal signal peptide occupies residues methionine 1 to alanine 20. An N-linked (GlcNAc...) asparagine glycan is attached at asparagine 95. 3 residues coordinate Ca(2+): aspartate 136, aspartate 165, and aspartate 169. Arginine 222 is a catalytic residue.

The protein belongs to the polysaccharide lyase 1 family. Ca(2+) serves as cofactor.

The protein resides in the secreted. The enzyme catalyses Eliminative cleavage of (1-&gt;4)-alpha-D-galacturonan to give oligosaccharides with 4-deoxy-alpha-D-galact-4-enuronosyl groups at their non-reducing ends.. Pectinolytic enzyme consist of four classes of enzymes: pectin lyase, polygalacturonase, pectin methylesterase and rhamnogalacturonase. Among pectinolytic enzymes, pectin lyase is the most important in depolymerization of pectin, since it cleaves internal glycosidic bonds of highly methylated pectins. Favors pectate, the anion, over pectin, the methyl ester. This chain is Probable pectate lyase A (plyA), found in Aspergillus niger (strain ATCC MYA-4892 / CBS 513.88 / FGSC A1513).